Reading from the N-terminus, the 87-residue chain is Large ribosomal subunit protein eL20 (87 aa).

It belongs to the eukaryotic ribosomal protein eL20 family. In terms of assembly, part of the 50S ribosomal subunit. Binds 23S rRNA.

This chain is Large ribosomal subunit protein eL20, found in Staphylothermus marinus (strain ATCC 43588 / DSM 3639 / JCM 9404 / F1).